A 663-amino-acid polypeptide reads, in one-letter code: Innate immunity activator protein (663 aa).

A disordered region spans residues 1 to 73 (MLQMPKLNEI…PGPGWDQCSP (73 aa)). Low complexity predominate over residues 23–47 (EGRWAGPTGPEAARPARGARGQARG). Residues 50–59 (ARWDSWEHSR) are compositionally biased toward basic and acidic residues. A coiled-coil region spans residues 117-147 (NAVRKQQRALEARLEACLEELRRLCLREAEL). The Nuclear localization signal (NLS) 1 motif lies at 164 to 170 (PKVRRRI). Disordered regions lie at residues 219-363 (RQRK…SSLW) and 375-405 (IRNVPGQRQGRTSAPATPEMQGRRGQSQSLR). The segment covering 225–246 (ALQEEKKLRDLQRCLGDRRRNS) has biased composition (basic and acidic residues). Positions 259–272 (ELSASDDSSLSDGL) are enriched in low complexity. Over residues 282–298 (PKPPPESPAPPSRPLPP) the composition is skewed to pro residues. Basic and acidic residues predominate over residues 327 to 340 (TSLDHPYEKPRKSS). Positions 332 to 338 (PYEKPRK) match the Nuclear localization signal (NLS) 2 motif. A compositionally biased stretch (polar residues) spans 349 to 361 (PATTPQDQPNPSS). The short motif at 422 to 428 (PRRRPTH) is the Nuclear localization signal (NLS) 3 element. The interval 448–483 (PACHSCSEDSGSDVSSISHPTSPGSSSPDISFLRPL) is disordered. Residues 455-475 (EDSGSDVSSISHPTSPGSSSP) show a composition bias toward low complexity.

In terms of assembly, interacts with IRAK1, NOD2 and RIPK2; the interaction takes place upon PRR stimulation. Interacts with YWHAQ/14-3-3T; the interaction increases upon PRR stimulation and is required for cellular signaling pathway activation and cytokine secretion. Interacts (via N-terminal domain) with CYTH1 and CYTH2 (via their N-terminal domains). Interacts with FBXW11 and BTRC; associates with SCF E3 ubiquitin-protein ligase complexes.

Its subcellular location is the nucleus. The protein localises to the cytoplasm. Its function is as follows. Expressed in peripheral macrophages and intestinal myeloid-derived cells, is required for optimal PRR (pattern recognition receptor)-induced signaling, cytokine secretion, and bacterial clearance. Upon stimulation of a broad range of PRRs (pattern recognition receptor) such as NOD2 or TLR2, TLR3, TLR4, TLR5, TLR7 and TLR9, associates with YWHAQ/14-3-3T, which in turn leads to the recruitment and activation of MAP kinases and NF-kappa-B signaling complexes that amplifies PRR-induced downstream signals and cytokine secretion. In the intestine, regulates adherens junction stability by regulating the degradation of CYTH1 and CYTH2, probably acting as substrate cofactor for SCF E3 ubiquitin-protein ligase complexes. Stabilizes adherens junctions by limiting CYTH1-dependent ARF6 activation. This chain is Innate immunity activator protein, found in Mus musculus (Mouse).